Here is a 583-residue protein sequence, read N- to C-terminus: Orphan steroid hormone receptor 2 (583 aa).

Positions 84-159 (IELCAVCGDK…MGMKSDSVQC (76 aa)) form a DNA-binding region, nuclear receptor. 2 consecutive NR C4-type zinc fingers follow at residues 87–107 (CAVC…CEGC) and 123–142 (CRGN…CQYC). The NR LBD domain occupies 248 to 563 (TLASVVTSLA…SIIPYILRME (316 aa)).

The protein belongs to the nuclear hormone receptor family. NR2 subfamily. Binds DNA as a monomer. In terms of tissue distribution, expressed uniformly in the early embryo. In contrast, larval expression is localized to the epaulettes and mouth epithelium. Expressed in multiple adult organs including lantern muscle, tubefeet, intestine, coelomocytes and gonads. In the adult ovaries and testes, expression is specifically localized to the smooth muscle epithelial layer of cells which surround the ovarioles and acini, respectively (at protein level).

It localises to the cytoplasm. It is found in the nucleus. Its function is as follows. Orphan nuclear receptor. Binds to the hormone response element in the upstream promoter region of the CYIIIB gene in vitro. Both isoform 1 and isoform 2 bind DNA. This is Orphan steroid hormone receptor 2 from Strongylocentrotus purpuratus (Purple sea urchin).